Reading from the N-terminus, the 270-residue chain is Putative pyruvate, phosphate dikinase regulatory protein 2 (270 aa).

An ADP-binding site is contributed by 151–158; that stretch reads GVSRTSKT.

It belongs to the pyruvate, phosphate/water dikinase regulatory protein family. PDRP subfamily.

The catalysed reaction is N(tele)-phospho-L-histidyl/L-threonyl-[pyruvate, phosphate dikinase] + ADP = N(tele)-phospho-L-histidyl/O-phospho-L-threonyl-[pyruvate, phosphate dikinase] + AMP + H(+). It catalyses the reaction N(tele)-phospho-L-histidyl/O-phospho-L-threonyl-[pyruvate, phosphate dikinase] + phosphate + H(+) = N(tele)-phospho-L-histidyl/L-threonyl-[pyruvate, phosphate dikinase] + diphosphate. Bifunctional serine/threonine kinase and phosphorylase involved in the regulation of the pyruvate, phosphate dikinase (PPDK) by catalyzing its phosphorylation/dephosphorylation. This chain is Putative pyruvate, phosphate dikinase regulatory protein 2, found in Listeria welshimeri serovar 6b (strain ATCC 35897 / DSM 20650 / CCUG 15529 / CIP 8149 / NCTC 11857 / SLCC 5334 / V8).